The sequence spans 305 residues: Cell division control protein 2 homolog C (305 aa).

In terms of domain architecture, Protein kinase spans 4-297; that stretch reads YEKLEKVGEG…AKAALDHPYF (294 aa). Residues 10–18 and Lys-33 contribute to the ATP site; that span reads VGEGTYGKV. Thr-14 carries the post-translational modification Phosphothreonine. Tyr-15 is subject to Phosphotyrosine. Asp-138 acts as the Proton acceptor in catalysis. Thr-172 carries the post-translational modification Phosphothreonine; by CAK.

It belongs to the protein kinase superfamily. CMGC Ser/Thr protein kinase family. CDC2/CDKX subfamily.

The enzyme catalyses L-seryl-[protein] + ATP = O-phospho-L-seryl-[protein] + ADP + H(+). It carries out the reaction L-threonyl-[protein] + ATP = O-phospho-L-threonyl-[protein] + ADP + H(+). The catalysed reaction is [DNA-directed RNA polymerase] + ATP = phospho-[DNA-directed RNA polymerase] + ADP + H(+). In terms of biological role, plays a key role in the control of the eukaryotic cell cycle. The chain is Cell division control protein 2 homolog C (CDC2C) from Antirrhinum majus (Garden snapdragon).